Here is a 760-residue protein sequence, read N- to C-terminus: 5-methyltetrahydropteroyltriglutamate--homocysteine methyltransferase (760 aa).

5-methyltetrahydropteroyltri-L-glutamate is bound by residues 17–20 and Lys-118; that span reads RELK. Residues 436–438 and Glu-489 each bind L-homocysteine; that span reads IGS. Residues 436 to 438 and Glu-489 contribute to the L-methionine site; that span reads IGS. 5-methyltetrahydropteroyltri-L-glutamate contacts are provided by residues 520 to 521 and Trp-566; that span reads RC. Residue Asp-604 coordinates L-homocysteine. L-methionine is bound at residue Asp-604. Residue Glu-610 coordinates 5-methyltetrahydropteroyltri-L-glutamate. The Zn(2+) site is built by His-646, Cys-648, and Glu-670. His-699 acts as the Proton donor in catalysis. A Zn(2+)-binding site is contributed by Cys-731.

It belongs to the vitamin-B12 independent methionine synthase family. Requires Zn(2+) as cofactor.

The enzyme catalyses 5-methyltetrahydropteroyltri-L-glutamate + L-homocysteine = tetrahydropteroyltri-L-glutamate + L-methionine. The protein operates within amino-acid biosynthesis; L-methionine biosynthesis via de novo pathway; L-methionine from L-homocysteine (MetE route): step 1/1. In terms of biological role, catalyzes the transfer of a methyl group from 5-methyltetrahydrofolate to homocysteine resulting in methionine formation. The polypeptide is 5-methyltetrahydropteroyltriglutamate--homocysteine methyltransferase (Vibrio parahaemolyticus serotype O3:K6 (strain RIMD 2210633)).